The primary structure comprises 564 residues: Kelch repeat and BTB domain-containing protein 1 (564 aa).

The region spanning 21–88 (CDIDIVINDE…IYGIPLSLTN (68 aa)) is the BTB domain. One can recognise a BACK domain in the interval 123-219 (CIDFYIYADK…SLLSPQVIKS (97 aa)). 6 Kelch repeats span residues 252–297 (IELI…VLDN), 298–346 (IIYM…ADDE), 347–395 (YIYC…MLNG), 397–441 (IYVI…VHAG), 442–492 (KIYI…SVHN), and 494–539 (LYVG…CEPI).

As to quaternary structure, interacts (via BTB domain) with host CUL3.

It is found in the host cytoplasm. Its function is as follows. Probable substrate-specific adapter of CUL3-containing E3 ubiquitin-protein ligases which mediate the ubiquitination and subsequent proteasomal degradation of host target proteins. The chain is Kelch repeat and BTB domain-containing protein 1 (KBTB1) from Camelus.